An 85-amino-acid chain; its full sequence is Keratin-associated protein 7-1 (85 aa).

Positions 37-82 are 12 X 2 AA repeats of G-[YCGS]; sequence GSPLGYGCNGYSSLGYGFGGSSFSNLGCGYGGSFYRPWGSGSGFGY.

It belongs to the KRTAP type 7 family. Interacts with wool keratins. Wool.

In terms of biological role, in the wool cortex, wool keratin intermediate filaments are embedded in an interfilamentous matrix, consisting of hair keratin-associated proteins (KRTAP), which are essential for the formation of a rigid and resistant wool shaft through their extensive disulfide bond cross-linking with abundant cysteine residues of wool keratins. The matrix proteins include the high-sulfur and high-glycine-tyrosine keratins. This is Keratin-associated protein 7-1 (KRTAP7-1) from Ovis aries (Sheep).